A 313-amino-acid polypeptide reads, in one-letter code: Adhesin MafA 1/2 (313 aa).

A signal peptide spans M1–A14. A lipid anchor (N-palmitoyl cysteine) is attached at C15. C15 is lipidated: S-diacylglycerol cysteine. The span at G282–K298 shows a compositional bias: polar residues. Positions G282 to G313 are disordered.

The protein belongs to the MafA family.

It localises to the cell outer membrane. This chain is Adhesin MafA 1/2 (mafA1), found in Neisseria meningitidis serogroup C (strain 053442).